The primary structure comprises 239 residues: 1-(5-phosphoribosyl)-5-[(5-phosphoribosylamino)methylideneamino] imidazole-4-carboxamide isomerase (239 aa).

Asp-8 functions as the Proton acceptor in the catalytic mechanism. Catalysis depends on Asp-129, which acts as the Proton donor.

The protein belongs to the HisA/HisF family.

The protein localises to the cytoplasm. It carries out the reaction 1-(5-phospho-beta-D-ribosyl)-5-[(5-phospho-beta-D-ribosylamino)methylideneamino]imidazole-4-carboxamide = 5-[(5-phospho-1-deoxy-D-ribulos-1-ylimino)methylamino]-1-(5-phospho-beta-D-ribosyl)imidazole-4-carboxamide. It functions in the pathway amino-acid biosynthesis; L-histidine biosynthesis; L-histidine from 5-phospho-alpha-D-ribose 1-diphosphate: step 4/9. The protein is 1-(5-phosphoribosyl)-5-[(5-phosphoribosylamino)methylideneamino] imidazole-4-carboxamide isomerase of Bacillus anthracis (strain A0248).